Reading from the N-terminus, the 600-residue chain is Elongation factor 4 (600 aa).

The 183-residue stretch at 5–187 (KYIRNFSIVA…EIVEKIPAPE (183 aa)) folds into the tr-type G domain. Residues 17–22 (DHGKST) and 134–137 (NKVD) each bind GTP.

The protein belongs to the TRAFAC class translation factor GTPase superfamily. Classic translation factor GTPase family. LepA subfamily.

Its subcellular location is the cell membrane. The catalysed reaction is GTP + H2O = GDP + phosphate + H(+). Functionally, required for accurate and efficient protein synthesis under certain stress conditions. May act as a fidelity factor of the translation reaction, by catalyzing a one-codon backward translocation of tRNAs on improperly translocated ribosomes. Back-translocation proceeds from a post-translocation (POST) complex to a pre-translocation (PRE) complex, thus giving elongation factor G a second chance to translocate the tRNAs correctly. Binds to ribosomes in a GTP-dependent manner. This Clostridium perfringens (strain 13 / Type A) protein is Elongation factor 4.